Consider the following 1319-residue polypeptide: DNA-directed RNA polymerase subunit beta' (1319 aa).

Cys-59, Cys-61, Cys-74, and Cys-77 together coordinate Zn(2+). Residues Asp-449, Asp-451, and Asp-453 each coordinate Mg(2+). Residues Cys-773, Cys-846, Cys-853, and Cys-856 each contribute to the Zn(2+) site.

This sequence belongs to the RNA polymerase beta' chain family. As to quaternary structure, the RNAP catalytic core consists of 2 alpha, 1 beta, 1 beta' and 1 omega subunit. When a sigma factor is associated with the core the holoenzyme is formed, which can initiate transcription. The cofactor is Mg(2+). It depends on Zn(2+) as a cofactor.

The catalysed reaction is RNA(n) + a ribonucleoside 5'-triphosphate = RNA(n+1) + diphosphate. Its function is as follows. DNA-dependent RNA polymerase catalyzes the transcription of DNA into RNA using the four ribonucleoside triphosphates as substrates. This Fusobacterium nucleatum subsp. nucleatum (strain ATCC 25586 / DSM 15643 / BCRC 10681 / CIP 101130 / JCM 8532 / KCTC 2640 / LMG 13131 / VPI 4355) protein is DNA-directed RNA polymerase subunit beta'.